The following is a 277-amino-acid chain: Undecaprenyl-diphosphatase (277 aa).

The next 7 helical transmembrane spans lie at 1 to 21 (MTWI…FLPI), 41 to 61 (GAAF…IYFW), 90 to 110 (WLII…EDWI), 114 to 134 (FRSL…LALA), 191 to 211 (AFLL…YTSL), 224 to 244 (ETLV…AWLM), and 255 to 275 (FVWY…AGVI).

The protein belongs to the UppP family.

Its subcellular location is the cell membrane. The catalysed reaction is di-trans,octa-cis-undecaprenyl diphosphate + H2O = di-trans,octa-cis-undecaprenyl phosphate + phosphate + H(+). In terms of biological role, catalyzes the dephosphorylation of undecaprenyl diphosphate (UPP). Confers resistance to bacitracin. This chain is Undecaprenyl-diphosphatase, found in Micrococcus luteus (strain ATCC 4698 / DSM 20030 / JCM 1464 / CCM 169 / CCUG 5858 / IAM 1056 / NBRC 3333 / NCIMB 9278 / NCTC 2665 / VKM Ac-2230) (Micrococcus lysodeikticus).